The primary structure comprises 480 residues: Bifunctional protein HldE (480 aa).

The interval 1 to 316 (MNMHDFSKTK…EQLNASMRHQ (316 aa)) is ribokinase. An ATP-binding site is contributed by 192 to 195 (NQGE). Asp-261 is an active-site residue. The cytidylyltransferase stretch occupies residues 342-480 (FTNGCFDLLH…EAEIKEGAAQ (139 aa)).

The protein in the N-terminal section; belongs to the carbohydrate kinase PfkB family. This sequence in the C-terminal section; belongs to the cytidylyltransferase family. As to quaternary structure, homodimer.

The catalysed reaction is D-glycero-beta-D-manno-heptose 7-phosphate + ATP = D-glycero-beta-D-manno-heptose 1,7-bisphosphate + ADP + H(+). It carries out the reaction D-glycero-beta-D-manno-heptose 1-phosphate + ATP + H(+) = ADP-D-glycero-beta-D-manno-heptose + diphosphate. The protein operates within nucleotide-sugar biosynthesis; ADP-L-glycero-beta-D-manno-heptose biosynthesis; ADP-L-glycero-beta-D-manno-heptose from D-glycero-beta-D-manno-heptose 7-phosphate: step 1/4. It functions in the pathway nucleotide-sugar biosynthesis; ADP-L-glycero-beta-D-manno-heptose biosynthesis; ADP-L-glycero-beta-D-manno-heptose from D-glycero-beta-D-manno-heptose 7-phosphate: step 3/4. Functionally, catalyzes the phosphorylation of D-glycero-D-manno-heptose 7-phosphate at the C-1 position to selectively form D-glycero-beta-D-manno-heptose-1,7-bisphosphate. Catalyzes the ADP transfer from ATP to D-glycero-beta-D-manno-heptose 1-phosphate, yielding ADP-D-glycero-beta-D-manno-heptose. This is Bifunctional protein HldE from Hydrogenovibrio crunogenus (strain DSM 25203 / XCL-2) (Thiomicrospira crunogena).